A 160-amino-acid polypeptide reads, in one-letter code: Phosphopantetheine adenylyltransferase (160 aa).

Ser-9 is a binding site for substrate. Residues Ser-9 to Phe-10 and His-17 each bind ATP. The substrate site is built by Lys-41, Ile-73, and Lys-87. Residues Gly-88–Arg-90, Glu-98, and Tyr-122–Ser-128 contribute to the ATP site.

This sequence belongs to the bacterial CoaD family. In terms of assembly, homohexamer. Mg(2+) serves as cofactor.

It is found in the cytoplasm. It catalyses the reaction (R)-4'-phosphopantetheine + ATP + H(+) = 3'-dephospho-CoA + diphosphate. The protein operates within cofactor biosynthesis; coenzyme A biosynthesis; CoA from (R)-pantothenate: step 4/5. Its function is as follows. Reversibly transfers an adenylyl group from ATP to 4'-phosphopantetheine, yielding dephospho-CoA (dPCoA) and pyrophosphate. This chain is Phosphopantetheine adenylyltransferase, found in Mycolicibacterium gilvum (strain PYR-GCK) (Mycobacterium gilvum (strain PYR-GCK)).